A 585-amino-acid polypeptide reads, in one-letter code: MVYLEWAKADRNIQYRVINAIIKERIYPEQTFISQKGSLIEIQYHMHVLTIEVVRKSALERYEFTGDITYLNKGETSLIITLEGLLDVLNHDFDIPISERLREELIHSRDSLVETYKQMSHRQTLISQSFKFSRLPQDINFFSWLQHVKDSDKTDDLTYSESLVPEGHPTHPLTKTKLPLTMEEVRAYAPEFEKEIPLQIMMIEKDHVVCTAMDGNDQFIIDEIIPEYYNQIRVFLKSLGLKSEDYRAILVHPWQYDHTIGKYFEAWIAKKILIPTPFTILSKATLSFRTMSLIDKPYHVKLPVDAQATSAVRTVSTVTTVDGPKLSYALQNMLNQYPGFKVAMEPFGEYANVDKDRARQLACIIRQKPEIDGKGATVVSASLVNKNPIDQKVIVDSYLEWLNQGITKESITTFIERYAQALIPPLIAFIQNYGIALEAHMQNTVVNLGPHFDIQFLVRDLGGSRIDLETLQHRVSDIKITNDSLIADSIDAVIAKFQHAVIQNQMAELIHHFNQYDCVEETELFNIVQQVVAHAINPTLPHANELKDILFGPTITVKALLNMRMENKVKQYLNIELDNPIKKEV.

The protein belongs to the IucA/IucC family.

The enzyme catalyses N(5)-[(S)-citryl]-D-ornithine + citrate + ATP = staphyloferrin A + AMP + diphosphate + H(+). It functions in the pathway siderophore biosynthesis. Its function is as follows. Involved in the biosynthesis of the siderophore staphyloferrin A. Catalyzes the ATP-dependent condensation of a citryl-D-ornithine intermediate, produced by SfnaD, and citrate to form staphyloferrin A. This is Staphyloferrin A synthase from Staphylococcus aureus (strain NCTC 8325 / PS 47).